Reading from the N-terminus, the 515-residue chain is Interferon alpha/beta receptor 2 (515 aa).

The first 26 residues, 1–26 (MLLSQNAFIFRSLNLVLMVYISLVFG), serve as a signal peptide directing secretion. Topologically, residues 27–243 (ISYDSPDYTD…QESESAESAK (217 aa)) are extracellular. 2 disulfides stabilise this stretch: Cys39-Cys122 and Cys85-Cys93. 5 N-linked (GlcNAc...) asparagine glycosylation sites follow: Asn58, Asn87, Asn116, Asn188, and Asn192. Cys207 and Cys227 are joined by a disulfide. The helical transmembrane segment at 244–264 (IGGIITVFLIALVLTSTIVTL) threads the bilayer. Residues 265 to 515 (KWIGYICLRN…VDLGDGYIMR (251 aa)) are Cytoplasmic-facing. Disordered regions lie at residues 318–418 (YDDE…EGSG) and 455–515 (EMVD…YIMR). At Tyr337 the chain carries Phosphotyrosine. Positions 362 to 375 (PESEEEPDLPEVDV) are enriched in acidic residues. Phosphoserine is present on Ser400. The mediates interaction with STAT2 (and required for the recruitment of USP18) stretch occupies residues 418–444 (GGRITFNVDLNSVFLRVLDDEDSDDLE). Polar residues predominate over residues 464–488 (NVQSNHLLASGEGTQPTFPSPSSEG). Ser467 is modified (phosphoserine). Tyr512 carries the post-translational modification Phosphotyrosine.

Belongs to the type II cytokine receptor family. As to quaternary structure, heterodimer with IFNAR1; forming the receptor for type I interferon. Interacts with JAK1. Interacts with the transcriptional factors STAT1 and STAT2. Interacts with USP18; indirectly via STAT2, it negatively regulates the assembly of the ternary interferon-IFNAR1-IFNAR2 complex and therefore type I interferon signaling. In terms of processing, phosphorylated on tyrosine residues upon interferon binding. Phosphorylation at Tyr-337 or Tyr-512 are sufficient to mediate interferon dependent activation of STAT1, STAT2 and STAT3 leading to antiproliferative effects on many different cell types. Post-translationally, glycosylated. Isoform 3 is detected in the urine (at protein level). Expressed in blood cells. Expressed in lymphoblastoid and fibrosarcoma cell lines.

The protein localises to the cell membrane. Its subcellular location is the secreted. Its function is as follows. Together with IFNAR1, forms the heterodimeric receptor for type I interferons (including interferons alpha, beta, epsilon, omega and kappa). Type I interferon binding activates the JAK-STAT signaling cascade, resulting in transcriptional activation or repression of interferon-regulated genes that encode the effectors of the interferon response. Mechanistically, type I interferon-binding brings the IFNAR1 and IFNAR2 subunits into close proximity with one another, driving their associated Janus kinases (JAKs) (TYK2 bound to IFNAR1 and JAK1 bound to IFNAR2) to cross-phosphorylate one another. The activated kinases phosphorylate specific tyrosine residues on the intracellular domains of IFNAR1 and IFNAR2, forming docking sites for the STAT transcription factors (STAT1, STAT2 and STAT). STAT proteins are then phosphorylated by the JAKs, promoting their translocation into the nucleus to regulate expression of interferon-regulated genes. Functionally, potent inhibitor of type I IFN receptor activity. The chain is Interferon alpha/beta receptor 2 (IFNAR2) from Homo sapiens (Human).